The chain runs to 437 residues: GTPase Der (437 aa).

2 EngA-type G domains span residues 4–168 and 178–353; these read NIVA…PEKP and PRFA…ENRK. GTP contacts are provided by residues 10–17, 57–61, 120–123, 184–191, 231–235, and 296–299; these read GRPNVGKS, DTGGY, NKVD, GRPNAGKS, DTAGI, and NKWD. Residues 354–437 form the KH-like domain; that stretch reads QRISTSKFNE…VPIDIYIREK (84 aa).

It belongs to the TRAFAC class TrmE-Era-EngA-EngB-Septin-like GTPase superfamily. EngA (Der) GTPase family. In terms of assembly, associates with the 50S ribosomal subunit.

Its function is as follows. GTPase that plays an essential role in the late steps of ribosome biogenesis. This chain is GTPase Der, found in Flavobacterium johnsoniae (strain ATCC 17061 / DSM 2064 / JCM 8514 / BCRC 14874 / CCUG 350202 / NBRC 14942 / NCIMB 11054 / UW101) (Cytophaga johnsonae).